Consider the following 42-residue polypeptide: Cytochrome b559 subunit beta (42 aa).

A helical transmembrane segment spans residues 17 to 33 (WLSIHALAVPTVFFLGA). H21 provides a ligand contact to heme.

This sequence belongs to the PsbE/PsbF family. Heterodimer of an alpha subunit and a beta subunit. PSII is composed of 1 copy each of membrane proteins PsbA, PsbB, PsbC, PsbD, PsbE, PsbF, PsbH, PsbI, PsbJ, PsbK, PsbL, PsbM, PsbT, PsbX, PsbY, PsbZ, Psb30/Ycf12, at least 3 peripheral proteins of the oxygen-evolving complex and a large number of cofactors. It forms dimeric complexes. The cofactor is heme b.

The protein resides in the plastid. Its subcellular location is the chloroplast thylakoid membrane. In terms of biological role, this b-type cytochrome is tightly associated with the reaction center of photosystem II (PSII). PSII is a light-driven water:plastoquinone oxidoreductase that uses light energy to abstract electrons from H(2)O, generating O(2) and a proton gradient subsequently used for ATP formation. It consists of a core antenna complex that captures photons, and an electron transfer chain that converts photonic excitation into a charge separation. In Tupiella akineta (Green alga), this protein is Cytochrome b559 subunit beta.